The following is a 458-amino-acid chain: uncharacterized protein (458 aa).

One can recognise a TRAM domain in the interval 8–66; it reads PVEKNEFIDVVFEDLTHDGAGVAKVKGYPIFVKNGLPGEEAQIKIIKVKKNFAFGRLMK. [4Fe-4S] cluster is bound by residues cysteine 79, cysteine 85, cysteine 88, and cysteine 166. Residues glutamine 290, tyrosine 319, glutamate 340, and aspartate 388 each coordinate S-adenosyl-L-methionine. Cysteine 415 acts as the Nucleophile in catalysis.

The protein belongs to the class I-like SAM-binding methyltransferase superfamily. RNA M5U methyltransferase family.

This is an uncharacterized protein from Bacillus cereus (strain ATCC 14579 / DSM 31 / CCUG 7414 / JCM 2152 / NBRC 15305 / NCIMB 9373 / NCTC 2599 / NRRL B-3711).